The primary structure comprises 403 residues: Phosphopentomutase (403 aa).

Residues D13, D298, H303, D339, H340, and H351 each contribute to the Mn(2+) site.

The protein belongs to the phosphopentomutase family. It depends on Mn(2+) as a cofactor.

Its subcellular location is the cytoplasm. It catalyses the reaction 2-deoxy-alpha-D-ribose 1-phosphate = 2-deoxy-D-ribose 5-phosphate. The catalysed reaction is alpha-D-ribose 1-phosphate = D-ribose 5-phosphate. It functions in the pathway carbohydrate degradation; 2-deoxy-D-ribose 1-phosphate degradation; D-glyceraldehyde 3-phosphate and acetaldehyde from 2-deoxy-alpha-D-ribose 1-phosphate: step 1/2. Functionally, isomerase that catalyzes the conversion of deoxy-ribose 1-phosphate (dRib-1-P) and ribose 1-phosphate (Rib-1-P) to deoxy-ribose 5-phosphate (dRib-5-P) and ribose 5-phosphate (Rib-5-P), respectively. The protein is Phosphopentomutase of Streptococcus thermophilus (strain CNRZ 1066).